We begin with the raw amino-acid sequence, 100 residues long: MRLTKREQEKMMISLAGMIAEKRKDRGLKLNQPEAVALITSRLLEGARDGKTVGELMNEGATWLTKDDVMEGIPEMIPMIQVEATFPDGTKLITVTDPIR.

The protein belongs to the urease gamma subunit family. As to quaternary structure, heterotrimer of UreA (gamma), UreB (beta) and UreC (alpha) subunits. Three heterotrimers associate to form the active enzyme.

Its subcellular location is the cytoplasm. It carries out the reaction urea + 2 H2O + H(+) = hydrogencarbonate + 2 NH4(+). Its pathway is nitrogen metabolism; urea degradation; CO(2) and NH(3) from urea (urease route): step 1/1. The protein is Urease subunit gamma of Limosilactobacillus fermentum (Lactobacillus fermentum).